Here is a 197-residue protein sequence, read N- to C-terminus: EF-hand calcium-binding domain-containing protein 9 (197 aa).

Ca(2+)-binding residues include Asp-58 and Asp-69. EF-hand domains lie at Leu-59–His-94, Gly-100–Asn-135, and Ile-136–Lys-171. 4 residues coordinate Ca(2+): Asp-149, Asp-153, Arg-155, and Glu-160. A compositionally biased stretch (basic and acidic residues) spans Lys-177–Arg-188. Residues Lys-177–Lys-197 are disordered.

As to quaternary structure, component of the CatSper complex or CatSpermasome composed of the core pore-forming members CATSPER1, CATSPER2, CATSPER3 and CATSPER4 as well as auxiliary members CATSPERB, CATSPERG, CATSPERD, CATSPERE, CATSPERZ, C2CD6/CATSPERT, TMEM249, TMEM262 and EFCAB9. HSPA1 may be an additional auxiliary complex member. The core complex members CATSPER1, CATSPER2, CATSPER3 and CATSPER4 form a heterotetrameric channel. The auxiliary CATSPERB, CATSPERG, CATSPERD and CATSPERE subunits form a pavilion-like structure over the pore which stabilizes the complex through interactions with CATSPER4, CATSPER3, CATSPER1 and CATSPER2 respectively. TMEM262/CATSPERH interacts with CATSPERB, further stabilizing the complex. C2CD6/CATSPERT interacts at least with CATSPERD and is required for targeting the CatSper complex in the flagellar membrane. Interacts with CATSPERZ; the interaction is direct, Ca(2+)-dependent and connects EFCAB9 with the CatSper complex. Dissociates from CATSPERZ at elevated pH.

The protein localises to the cytoplasm. The protein resides in the cell projection. Its subcellular location is the cilium. It is found in the flagellum. In terms of biological role, auxiliary component of the CatSper complex, a complex involved in sperm cell hyperactivation. pH-dependent Ca(2+) sensor required to activate the CatSper channel. Sperm cell hyperactivation is needed for sperm motility which is essential late in the preparation of sperm for fertilization. Associates with the CatSper complex via direct interaction with CATSPERZ, and senses intracellular Ca(2+). Together with CATSPERZ, associates with the CatSper channel pore and is required for the two-row structure of each single CatSper channel. This is EF-hand calcium-binding domain-containing protein 9 from Homo sapiens (Human).